We begin with the raw amino-acid sequence, 374 residues long: MSKGIILLAAGGTGGHVFPAEALAYKLKERGYSVHLVTDSRAERYAGKFPADEIHVVPSATIGSKNPIKVARSLWTLWTGIRAARKLIRTIKPLCVVGFGGYPTVPPLLAATRMGVPAMIHEQNAVMGRANKALAARVQAIAGGFLPENGGTFPEKTVTTGNPVRPAVIEAAKQPYVPSVPDDPFNLVVFGGSQGAQYFSKAVPTAISLLEEPLRKRLRITQQVRPEDMETVNSCTRKLEMGADIAPFFSDMAERIGAAHLVLCRSGASTVSELAVIGRPAILVPYPYALDHDQAANAAALAATGGVKVIPQAELTPEKLSTILRGAMTMPDKLAKMAAAAKQAGKPDAASLLADMVEAIAAKRSIQDFKGAGV.

UDP-N-acetyl-alpha-D-glucosamine-binding positions include 13-15 (TGG), asparagine 124, arginine 165, serine 193, and glutamine 294.

This sequence belongs to the glycosyltransferase 28 family. MurG subfamily.

The protein resides in the cell inner membrane. The enzyme catalyses di-trans,octa-cis-undecaprenyl diphospho-N-acetyl-alpha-D-muramoyl-L-alanyl-D-glutamyl-meso-2,6-diaminopimeloyl-D-alanyl-D-alanine + UDP-N-acetyl-alpha-D-glucosamine = di-trans,octa-cis-undecaprenyl diphospho-[N-acetyl-alpha-D-glucosaminyl-(1-&gt;4)]-N-acetyl-alpha-D-muramoyl-L-alanyl-D-glutamyl-meso-2,6-diaminopimeloyl-D-alanyl-D-alanine + UDP + H(+). It functions in the pathway cell wall biogenesis; peptidoglycan biosynthesis. Cell wall formation. Catalyzes the transfer of a GlcNAc subunit on undecaprenyl-pyrophosphoryl-MurNAc-pentapeptide (lipid intermediate I) to form undecaprenyl-pyrophosphoryl-MurNAc-(pentapeptide)GlcNAc (lipid intermediate II). This chain is UDP-N-acetylglucosamine--N-acetylmuramyl-(pentapeptide) pyrophosphoryl-undecaprenol N-acetylglucosamine transferase, found in Rhizobium rhizogenes (strain K84 / ATCC BAA-868) (Agrobacterium radiobacter).